We begin with the raw amino-acid sequence, 596 residues long: Probable translation initiation factor IF-2 (596 aa).

Positions 3 to 220 (IRSPIVSVLG…MLLGLAQEYL (218 aa)) constitute a tr-type G domain. The interval 12 to 19 (GHVDHGKT) is G1. 12 to 19 (GHVDHGKT) serves as a coordination point for GTP. The segment at 37–41 (GITQH) is G2. Residues 76–79 (DTPG) form a G3 region. Residues 76 to 80 (DTPGH) and 130 to 133 (NKID) contribute to the GTP site. Positions 130-133 (NKID) are G4. The interval 198-200 (SAK) is G5.

It belongs to the TRAFAC class translation factor GTPase superfamily. Classic translation factor GTPase family. IF-2 subfamily.

Its function is as follows. Function in general translation initiation by promoting the binding of the formylmethionine-tRNA to ribosomes. Seems to function along with eIF-2. The polypeptide is Probable translation initiation factor IF-2 (Methanobrevibacter smithii (strain ATCC 35061 / DSM 861 / OCM 144 / PS)).